The primary structure comprises 170 residues: Adenine phosphoribosyltransferase (170 aa).

It belongs to the purine/pyrimidine phosphoribosyltransferase family. In terms of assembly, homodimer.

It is found in the cytoplasm. It catalyses the reaction AMP + diphosphate = 5-phospho-alpha-D-ribose 1-diphosphate + adenine. The protein operates within purine metabolism; AMP biosynthesis via salvage pathway; AMP from adenine: step 1/1. Catalyzes a salvage reaction resulting in the formation of AMP, that is energically less costly than de novo synthesis. In Maridesulfovibrio salexigens (strain ATCC 14822 / DSM 2638 / NCIMB 8403 / VKM B-1763) (Desulfovibrio salexigens), this protein is Adenine phosphoribosyltransferase.